The chain runs to 907 residues: Translation initiation factor IF-2 (907 aa).

Positions 1 to 305 (MSEGNDQDQG…SLASVRRQRE (305 aa)) are disordered. Positions 62–80 (SGSGSSGGGRAGGRGGSGG) are enriched in gly residues. Basic and acidic residues-rich tracts occupy residues 93-114 (RVLE…EQEK) and 122-158 (EEAR…ERRA). Over residues 211–230 (PARPVTPSRPATPAATPQAP) the composition is skewed to low complexity. Basic and acidic residues-rich tracts occupy residues 240–249 (RVGEAEDDRR) and 271–280 (KGGDSRRSGR). One can recognise a tr-type G domain in the interval 406 to 576 (PRPPVVTVMG…LLQAEMLDLR (171 aa)). Residues 415–422 (GHVDHGKT) are G1. A GTP-binding site is contributed by 415–422 (GHVDHGKT). Residues 440-444 (GITQH) are G2. Residues 462–465 (DTPG) form a G3 region. GTP is bound by residues 462–466 (DTPGH) and 516–519 (NKCD). Residues 516–519 (NKCD) are G4. Residues 552-554 (SAL) form a G5 region.

The protein belongs to the TRAFAC class translation factor GTPase superfamily. Classic translation factor GTPase family. IF-2 subfamily.

It is found in the cytoplasm. In terms of biological role, one of the essential components for the initiation of protein synthesis. Protects formylmethionyl-tRNA from spontaneous hydrolysis and promotes its binding to the 30S ribosomal subunits. Also involved in the hydrolysis of GTP during the formation of the 70S ribosomal complex. This chain is Translation initiation factor IF-2, found in Gluconacetobacter diazotrophicus (strain ATCC 49037 / DSM 5601 / CCUG 37298 / CIP 103539 / LMG 7603 / PAl5).